Consider the following 183-residue polypeptide: MSQSNPILRGLAITTAIAALSATGYAIYFDYQRRNSPQFRKVLRQRAKEQAKMEEQAKTHAKEVKLQKVTEFLSMELAKDPIPSDPSEREATFTTNVENGERLSMQQGKELEAASKFYKALTVYPQPADLLGIYQRSIPEAIYEYIILMIAILPPANVASFVKGVVGSKAESDAVAEANDIDD.

Topologically, residues 1–8 (MSQSNPIL) are mitochondrial intermembrane. The helical transmembrane segment at 9–28 (RGLAITTAIAALSATGYAIY) threads the bilayer. Over 29 to 183 (FDYQRRNSPQ…AVAEANDIDD (155 aa)) the chain is Cytoplasmic. Residue serine 172 is modified to Phosphoserine.

This sequence belongs to the Tom20 family. As to quaternary structure, forms part of the preprotein translocase complex of the outer mitochondrial membrane (TOM complex) which consists of at least 7 different proteins (TOM5, TOM6, TOM7, TOM20, TOM22, TOM40 and TOM70). In the complex, interacts with TOM22.

The protein resides in the mitochondrion outer membrane. In terms of biological role, central component of the TOM (translocase of outer membrane) receptor complex responsible for the recognition and translocation of cytosolically synthesized mitochondrial preproteins. Together with TOM22 functions as the transit peptide receptor at the surface of the mitochondrion outer membrane and facilitates the movement of preproteins into the TOM40 translocation pore. In Saccharomyces cerevisiae (strain ATCC 204508 / S288c) (Baker's yeast), this protein is Mitochondrial import receptor subunit TOM20 (TOM20).